We begin with the raw amino-acid sequence, 508 residues long: Maturase K (508 aa).

This sequence belongs to the intron maturase 2 family. MatK subfamily.

The protein localises to the plastid. It localises to the chloroplast. Its function is as follows. Usually encoded in the trnK tRNA gene intron. Probably assists in splicing its own and other chloroplast group II introns. The protein is Maturase K of Chaetosphaeridium globosum (Charophycean green alga).